Consider the following 364-residue polypeptide: DNA replication and repair protein RecF (364 aa).

Residue 30–37 participates in ATP binding; that stretch reads GDNGAGKT.

Belongs to the RecF family.

The protein resides in the cytoplasm. In terms of biological role, the RecF protein is involved in DNA metabolism; it is required for DNA replication and normal SOS inducibility. RecF binds preferentially to single-stranded, linear DNA. It also seems to bind ATP. The chain is DNA replication and repair protein RecF from Stenotrophomonas maltophilia (strain R551-3).